The following is a 1036-amino-acid chain: Cellulose synthase-like protein D1 (1036 aa).

Residues methionine 1–asparagine 99 form a disordered region. 2 stretches are compositionally biased toward polar residues: residues threonine 9–arginine 19 and asparagine 69–glutamate 80. Gly residues predominate over residues asparagine 86–proline 95. Helical transmembrane passes span isoleucine 178–tryptophan 198 and alanine 208–leucine 228. Aspartate 308 is a catalytic residue. Positions alanine 626 to asparagine 665 are disordered. Residues threonine 631–serine 642 show a composition bias toward low complexity. The active site involves aspartate 741. 6 helical membrane-spanning segments follow: residues isoleucine 817–phenylalanine 837, isoleucine 848–glutamate 868, leucine 895–leucine 915, glycine 938–alanine 958, isoleucine 962–valine 982, and threonine 1002–isoleucine 1022.

This sequence belongs to the glycosyltransferase 2 family. Plant cellulose synthase-like D subfamily.

The protein localises to the golgi apparatus membrane. Thought to be a Golgi-localized beta-glycan synthase that polymerize the backbones of noncellulosic polysaccharides (hemicelluloses) of plant cell wall. The polypeptide is Cellulose synthase-like protein D1 (CSLD1) (Arabidopsis thaliana (Mouse-ear cress)).